Reading from the N-terminus, the 324-residue chain is Holliday junction branch migration complex subunit RuvB (324 aa).

Residues 1-168 (MEDLALRPKT…FGIVEHLEYY (168 aa)) are large ATPase domain (RuvB-L). Residues L6, R7, G48, K51, T52, T53, 115–117 (EDF), R158, Y168, and R205 contribute to the ATP site. T52 serves as a coordination point for Mg(2+). The interval 169–239 (TPEELAQGVM…RALEALAALG (71 aa)) is small ATPAse domain (RuvB-S). The head domain (RuvB-H) stretch occupies residues 242–324 (ELGLEKRDRE…PPPVGPLLEP (83 aa)). Residues R297 and R302 each coordinate DNA.

It belongs to the RuvB family. Homohexamer. Forms an RuvA(8)-RuvB(12)-Holliday junction (HJ) complex. HJ DNA is sandwiched between 2 RuvA tetramers; dsDNA enters through RuvA and exits via RuvB. An RuvB hexamer assembles on each DNA strand where it exits the tetramer. Each RuvB hexamer is contacted by two RuvA subunits (via domain III) on 2 adjacent RuvB subunits; this complex drives branch migration. In the full resolvosome a probable DNA-RuvA(4)-RuvB(12)-RuvC(2) complex forms which resolves the HJ.

It is found in the cytoplasm. It catalyses the reaction ATP + H2O = ADP + phosphate + H(+). With respect to regulation, the ATPase activity of RuvB is enhanced by RuvA. Its function is as follows. The RuvA-RuvB-RuvC complex processes Holliday junction (HJ) DNA during genetic recombination and DNA repair, while the RuvA-RuvB complex plays an important role in the rescue of blocked DNA replication forks via replication fork reversal (RFR). RuvA specifically binds to HJ cruciform DNA, conferring on it an open structure. The RuvB hexamer acts as an ATP-dependent pump, pulling dsDNA into and through the RuvAB complex. RuvB forms 2 homohexamers on either side of HJ DNA bound by 1 or 2 RuvA tetramers; 4 subunits per hexamer contact DNA at a time. Coordinated motions by a converter formed by DNA-disengaged RuvB subunits stimulates ATP hydrolysis and nucleotide exchange. Immobilization of the converter enables RuvB to convert the ATP-contained energy into a lever motion, pulling 2 nucleotides of DNA out of the RuvA tetramer per ATP hydrolyzed, thus driving DNA branch migration. The RuvB motors rotate together with the DNA substrate, which together with the progressing nucleotide cycle form the mechanistic basis for DNA recombination by continuous HJ branch migration. Branch migration allows RuvC to scan DNA until it finds its consensus sequence, where it cleaves and resolves cruciform DNA. In terms of biological role, has Mg(2+)-, DNA-dependent ATPase activity; dsDNA and supercoiled DNA but not ssDNA stimulate activity. Binds to linear dsDNA in the absence of ATP or ATP-gamma-S. This subunit can promote Holliday junction migration alone in vitro. Partially complements an E.coli deletion for UV sensitivity. The sequence is that of Holliday junction branch migration complex subunit RuvB from Thermus thermophilus.